A 438-amino-acid polypeptide reads, in one-letter code: Protein phosphatase 2C homolog 2 (438 aa).

A PPM-type phosphatase domain is found at 23-294 (IYGVSAMQGW…DNMTMVIIGF (272 aa)). Mn(2+) is bound by residues Asp-67, Gly-68, Asp-236, and Asp-285. The interval 370–438 (VLTGSDDTEM…EKTPEESKKD (69 aa)) is disordered. Residues 375–387 (DDTEMFDNADEDK) show a composition bias toward acidic residues. The segment covering 398–438 (GKTDAKEETEAKPAPEAESSKPADGSEKKQDEKTPEESKKD) has biased composition (basic and acidic residues).

It belongs to the PP2C family. Requires Mg(2+) as cofactor. Mn(2+) is required as a cofactor.

It localises to the cytoplasm. The protein localises to the nucleus. It catalyses the reaction O-phospho-L-seryl-[protein] + H2O = L-seryl-[protein] + phosphate. The catalysed reaction is O-phospho-L-threonyl-[protein] + H2O = L-threonyl-[protein] + phosphate. Functionally, dephosphorylating regulator for many key proteins. Negatively regulates the endoplasmic reticulum unfolded protein response. In Hypocrea jecorina (strain QM6a) (Trichoderma reesei), this protein is Protein phosphatase 2C homolog 2.